The primary structure comprises 331 residues: Ketol-acid reductoisomerase (NADP(+)) (331 aa).

The KARI N-terminal Rossmann domain occupies 2-181 (IKKYYESDAD…GATRAVVFET (180 aa)). Residues 25-28 (YGSQ), R48, S52, and 82-85 (DESQ) each bind NADP(+). Residue H107 is part of the active site. NADP(+) is bound at residue G133. Positions 182 to 327 (TFREETETDL…AEIRGLMPQF (146 aa)) constitute a KARI C-terminal knotted domain. D190, E194, E226, and E230 together coordinate Mg(2+). S251 lines the substrate pocket.

It belongs to the ketol-acid reductoisomerase family. Requires Mg(2+) as cofactor.

It catalyses the reaction (2R)-2,3-dihydroxy-3-methylbutanoate + NADP(+) = (2S)-2-acetolactate + NADPH + H(+). The catalysed reaction is (2R,3R)-2,3-dihydroxy-3-methylpentanoate + NADP(+) = (S)-2-ethyl-2-hydroxy-3-oxobutanoate + NADPH + H(+). It participates in amino-acid biosynthesis; L-isoleucine biosynthesis; L-isoleucine from 2-oxobutanoate: step 2/4. It functions in the pathway amino-acid biosynthesis; L-valine biosynthesis; L-valine from pyruvate: step 2/4. Involved in the biosynthesis of branched-chain amino acids (BCAA). Catalyzes an alkyl-migration followed by a ketol-acid reduction of (S)-2-acetolactate (S2AL) to yield (R)-2,3-dihydroxy-isovalerate. In the isomerase reaction, S2AL is rearranged via a Mg-dependent methyl migration to produce 3-hydroxy-3-methyl-2-ketobutyrate (HMKB). In the reductase reaction, this 2-ketoacid undergoes a metal-dependent reduction by NADPH to yield (R)-2,3-dihydroxy-isovalerate. The chain is Ketol-acid reductoisomerase (NADP(+)) from Methanosphaerula palustris (strain ATCC BAA-1556 / DSM 19958 / E1-9c).